The primary structure comprises 339 residues: Uroporphyrinogen decarboxylase (339 aa).

Residues 21–25 (RQAGR), F40, D71, Y147, S202, and H315 each bind substrate.

It belongs to the uroporphyrinogen decarboxylase family. In terms of assembly, homodimer.

It is found in the cytoplasm. It catalyses the reaction uroporphyrinogen III + 4 H(+) = coproporphyrinogen III + 4 CO2. It functions in the pathway porphyrin-containing compound metabolism; protoporphyrin-IX biosynthesis; coproporphyrinogen-III from 5-aminolevulinate: step 4/4. In terms of biological role, catalyzes the decarboxylation of four acetate groups of uroporphyrinogen-III to yield coproporphyrinogen-III. In Helicobacter pylori (strain J99 / ATCC 700824) (Campylobacter pylori J99), this protein is Uroporphyrinogen decarboxylase.